We begin with the raw amino-acid sequence, 576 residues long: Nuclear receptor subfamily 1 group D member 2 (576 aa).

Positions 1-60 (MELNAGGVIAYISSSSSASSPASCHSEGSENSFQSSSSSVPSSPNSSNCDANGNPKNADI) are required for phosphorylation by CSNK1E and cytoplasmic localization. A modulating region spans residues 1–99 (MELNAGGVIA…HSGMTKFSGM (99 aa)). Residues 13–47 (SSSSSASSPASCHSEGSENSFQSSSSSVPSSPNSS) show a composition bias toward low complexity. The segment at 13–90 (SSSSSASSPA…TSAPGMTKSH (78 aa)) is disordered. Ser-46 carries the phosphoserine; by GSK3-beta modification. The segment at residues 100 to 176 (VLLCKVCGDV…VGMSRDAVRF (77 aa)) is a DNA-binding region (nuclear receptor). NR C4-type zinc fingers lie at residues 103 to 123 (CKVC…CEGC) and 140 to 164 (CLKN…FKKC). 2 positions are modified to N6-acetyllysine; by KAT5: Lys-162 and Lys-163. 2 disordered regions span residues 215 to 246 (QHDQ…SDFA) and 263 to 282 (LYNQ…QRGE). Composition is skewed to basic and acidic residues over residues 227 to 237 (LRPKSQLEQEN) and 263 to 272 (LYNQEHRENS). 2 disulfide bridges follow: Cys-334–Cys-340 and Cys-371–Cys-381. The NR LBD domain maps to 366 to 576 (RNSYLCNTGG…EELLAFKVHP (211 aa)). Residues Cys-381 and His-565 each contribute to the heme site. An interaction with ZNHIT1 region spans residues 394-576 (SGHEIWEEFS…EELLAFKVHP (183 aa)).

This sequence belongs to the nuclear hormone receptor family. NR1 subfamily. As to quaternary structure, binds DNA as a monomer or a homodimer. Interacts with NCOA5 coactivator, leading to a strong increase of transcription of target genes. Interacts (via N-terminus) with KAT5. Interacts (via C-terminus) with HDAC1. Interacts with ZNHIT1. Interacts with SIAH2. Post-translationally, deacetylated by HDAC1. Acetylation and deacetylation regulate its transcriptional regulatory activity. Under more reducing intracellular redox conditions, Cys-381 is in its heme-bound state, which is optimal for recruitment of the NCOR1/HDAC3 corepressor complex and repression of target genes. When subjected to oxidative stress conditions, Cys-381 undergoes oxidation to form a disulfide bridge with Cys-371, also triggering a ligand switch that results in release of bound heme and derepression of target genes. In terms of processing, ubiquitinated by SIAH2; leading to its proteasomal degradation. Post-translationally, phosphorylated by CSNK1E; phosphorylation enhances its cytoplasmic localization. In terms of tissue distribution, ubiquitous. Expressed abundantly in skeletal muscle and brown adipose tissue. Expressed during skeletal muscle myogenesis.

The protein localises to the nucleus. It localises to the cytoplasm. With respect to regulation, the heme-bound form can bind gaseous signaling molecules such as CO and nitric oxide (NO) and NO can reverse its transcriptional repressor activity. Its function is as follows. Transcriptional repressor which coordinates circadian rhythm and metabolic pathways in a heme-dependent manner. Integral component of the complex transcription machinery that governs circadian rhythmicity and forms a critical negative limb of the circadian clock by directly repressing the expression of core clock components BMAL1 and CLOCK. Also regulates genes involved in metabolic functions, including lipid metabolism and the inflammatory response. Acts as a receptor for heme which stimulates its interaction with the NCOR1/HDAC3 corepressor complex, enhancing transcriptional repression. Recognizes two classes of DNA response elements within the promoter of its target genes and can bind to DNA as either monomers or homodimers, depending on the nature of the response element. Binds as a monomer to a response element composed of the consensus half-site motif 5'-[A/G]GGTCA-3' preceded by an A/T-rich 5' sequence (RevRE), or as a homodimer to a direct repeat of the core motif spaced by two nuclegotides (RevDR-2). Acts as a potent competitive repressor of ROR alpha (RORA) function and also negatively regulates the expression of NR1D1. Regulates lipid and energy homeostasis in the skeletal muscle via repression of genes involved in lipid metabolism and myogenesis including: CD36, FABP3, FABP4, UCP3, SCD1 and MSTN. Regulates hepatic lipid metabolism via the repression of APOC3. Represses gene expression at a distance in macrophages by inhibiting the transcription of enhancer-derived RNAs (eRNAs). In addition to its activity as a repressor, can also act as a transcriptional activator. Acts as a transcriptional activator of the sterol regulatory element-binding protein 1 (SREBF1) and the inflammatory mediator interleukin-6 (IL6) in the skeletal muscle. Plays a role in the regulation of circadian sleep/wake cycle; essential for maintaining wakefulness during the dark phase or active period. Key regulator of skeletal muscle mitochondrial function; negatively regulates the skeletal muscle expression of core clock genes and genes involved in mitochondrial biogenesis, fatty acid beta-oxidation and lipid metabolism. May play a role in the circadian control of neutrophilic inflammation in the lung. This is Nuclear receptor subfamily 1 group D member 2 from Mus musculus (Mouse).